Here is a 327-residue protein sequence, read N- to C-terminus: GPI-linked NAD(P)(+)--arginine ADP-ribosyltransferase 1 (327 aa).

Positions 1–22 (MQMPAMMSLLLVSVGLMEALQA) are cleaved as a signal peptide. 2 disulfide bridges follow: cysteine 53–cysteine 277 and cysteine 174–cysteine 224. Asparagine 65 carries N-linked (GlcNAc...) asparagine glycosylation. The region spanning 73–273 (QVYADSWTLA…IYLRALGKHS (201 aa)) is the TR mART core domain. The NAD(+) site is built by tyrosine 121 and arginine 179. Active-site residues include arginine 179 and serine 202. Serine 233 serves as a coordination point for NAD(+). Glutamate 240 is an active-site residue. A glycan (N-linked (GlcNAc...) asparagine) is linked at asparagine 253. Serine 295 is lipidated: GPI-anchor amidated serine. The propeptide at 296–327 (AMGQSPLSAVWSLLLLLWFLVVRAFPDGPGLL) is removed in mature form.

It belongs to the Arg-specific ADP-ribosyltransferase family.

It localises to the sarcoplasmic reticulum membrane. The enzyme catalyses L-arginyl-[protein] + NAD(+) = N(omega)-(ADP-D-ribosyl)-L-arginyl-[protein] + nicotinamide + H(+). Functionally, has ADP-ribosyltransferase activity toward GLP1R. The chain is GPI-linked NAD(P)(+)--arginine ADP-ribosyltransferase 1 (ART1) from Homo sapiens (Human).